The primary structure comprises 92 residues: MARSLKKGPFVDDHLMSKIAKLNETEQKQVVKTWSRRSTIFPQFIGHTIAVYDGRKHVPVYVTEDMVGHKLGEFAPTRTYKGHDADDKKTRR.

This sequence belongs to the universal ribosomal protein uS19 family.

Functionally, protein S19 forms a complex with S13 that binds strongly to the 16S ribosomal RNA. The protein is Small ribosomal subunit protein uS19 of Bacillus thuringiensis subsp. konkukian (strain 97-27).